A 581-amino-acid polypeptide reads, in one-letter code: Multidrug resistance-like ATP-binding protein MdlA (581 aa).

Positions 18–303 constitute an ABC transmembrane type-1 domain; it reads YLGSIILLII…LAWMFNIVER (286 aa). 6 consecutive transmembrane segments (helical) span residues 23–43, 53–73, 127–149, 153–175, 247–267, and 280–300; these read ILLI…GILI, GFEI…VYIL, VVFA…ISVL, ITQI…AILI, VIYL…GWLV, and FIMY…MFNI. In terms of domain architecture, ABC transporter spans 337–571; sequence INIDMFFYPK…KNWYKSMYDH (235 aa). 369 to 376 provides a ligand contact to ATP; the sequence is GPTGAGKS.

This sequence belongs to the ABC transporter superfamily. Drug exporter-2 (TC 3.A.1.117) family.

The protein resides in the cell membrane. The catalysed reaction is ATP + H2O + xenobioticSide 1 = ADP + phosphate + xenobioticSide 2.. This chain is Multidrug resistance-like ATP-binding protein MdlA (mdlA), found in Buchnera aphidicola subsp. Schizaphis graminum (strain Sg).